The following is a 147-amino-acid chain: Endoribonuclease YbeY (147 aa).

Residues H107, H111, and H117 each coordinate Zn(2+).

This sequence belongs to the endoribonuclease YbeY family. Zn(2+) is required as a cofactor.

The protein resides in the cytoplasm. In terms of biological role, single strand-specific metallo-endoribonuclease involved in late-stage 70S ribosome quality control and in maturation of the 3' terminus of the 16S rRNA. This Solibacter usitatus (strain Ellin6076) protein is Endoribonuclease YbeY.